Here is a 609-residue protein sequence, read N- to C-terminus: Glutamine--fructose-6-phosphate aminotransferase [isomerizing] (609 aa).

The Nucleophile; for GATase activity role is filled by C2. The region spanning 2 to 219 is the Glutamine amidotransferase type-2 domain; that stretch reads CGIVAAVTQR…EGDIAIVARK (218 aa). SIS domains are found at residues 288–428 and 460–599; these read ENNI…SKKE and MANT…IDQP. The active-site For Fru-6P isomerization activity is K604.

Homodimer.

The protein resides in the cytoplasm. The catalysed reaction is D-fructose 6-phosphate + L-glutamine = D-glucosamine 6-phosphate + L-glutamate. In terms of biological role, catalyzes the first step in hexosamine metabolism, converting fructose-6P into glucosamine-6P using glutamine as a nitrogen source. The polypeptide is Glutamine--fructose-6-phosphate aminotransferase [isomerizing] (Buchnera aphidicola subsp. Acyrthosiphon pisum (strain APS) (Acyrthosiphon pisum symbiotic bacterium)).